The chain runs to 313 residues: Acetylglutamate kinase (313 aa).

Substrate-binding positions include 84-85 (GG), R106, and N210.

This sequence belongs to the acetylglutamate kinase family. ArgB subfamily.

It is found in the cytoplasm. It carries out the reaction N-acetyl-L-glutamate + ATP = N-acetyl-L-glutamyl 5-phosphate + ADP. Its pathway is amino-acid biosynthesis; L-arginine biosynthesis; N(2)-acetyl-L-ornithine from L-glutamate: step 2/4. Functionally, catalyzes the ATP-dependent phosphorylation of N-acetyl-L-glutamate. This is Acetylglutamate kinase from Gluconacetobacter diazotrophicus (strain ATCC 49037 / DSM 5601 / CCUG 37298 / CIP 103539 / LMG 7603 / PAl5).